The chain runs to 171 residues: Putative rhomboid protein L523 (171 aa).

4 consecutive transmembrane segments (helical) span residues 3-23 (YVTYIVLLILVVIFFSPLNFF), 67-87 (FAFCIIFIWILSSMLLLAEHT), 94-114 (VYTVGFSGVIFGLIVVYLMSL), and 119-139 (GLSIAGLVLSIIPQFFVSGIS). Ser100 acts as the Nucleophile in catalysis. The active site involves His143. Residues 144-164 (ICGMIAGFVYVVLFPLPKGSV) traverse the membrane as a helical segment.

It belongs to the peptidase S54 family.

Its subcellular location is the membrane. Functionally, probable serine protease. The protein is Putative rhomboid protein L523 of Acanthamoeba polyphaga mimivirus (APMV).